Here is a 117-residue protein sequence, read N- to C-terminus: DNA-directed RNA polymerase subunit omega (117 aa).

Belongs to the RNA polymerase subunit omega family. The RNAP catalytic core consists of 2 alpha, 1 beta, 1 beta' and 1 omega subunit. When a sigma factor is associated with the core the holoenzyme is formed, which can initiate transcription.

The enzyme catalyses RNA(n) + a ribonucleoside 5'-triphosphate = RNA(n+1) + diphosphate. Functionally, promotes RNA polymerase assembly. Latches the N- and C-terminal regions of the beta' subunit thereby facilitating its interaction with the beta and alpha subunits. This Cereibacter sphaeroides (strain ATCC 17025 / ATH 2.4.3) (Rhodobacter sphaeroides) protein is DNA-directed RNA polymerase subunit omega.